The primary structure comprises 102 residues: MDKVMRMSSEKGVVIFTKSSCCLCYAVQILFRDLRVQPTIHEIDNDPDCREIEKALVRLGCANAVPAVFVSGKLVGSTNDVMSLHLSGSLVPLIKPYQSFHN.

Residues 1–101 (MDKVMRMSSE…PLIKPYQSFH (101 aa)) enclose the Glutaredoxin domain. Cys-21 and Cys-24 form a disulfide bridge.

It belongs to the glutaredoxin family. CC-type subfamily.

It is found in the cytoplasm. Has a glutathione-disulfide oxidoreductase activity in the presence of NADPH and glutathione reductase. Reduces low molecular weight disulfides and proteins. This Arabidopsis thaliana (Mouse-ear cress) protein is Glutaredoxin-C14 (GRXC14).